The primary structure comprises 433 residues: 3-phosphoshikimate 1-carboxyvinyltransferase (433 aa).

3 residues coordinate 3-phosphoshikimate: Lys-22, Ser-23, and Arg-27. Lys-22 provides a ligand contact to phosphoenolpyruvate. Residues Gly-95 and Arg-123 each contribute to the phosphoenolpyruvate site. Residues Ser-167, Gln-169, Asp-315, and Lys-342 each contribute to the 3-phosphoshikimate site. Gln-169 contacts phosphoenolpyruvate. Asp-315 acts as the Proton acceptor in catalysis. Phosphoenolpyruvate contacts are provided by Arg-346 and Arg-387.

Belongs to the EPSP synthase family. In terms of assembly, monomer.

The protein localises to the cytoplasm. The enzyme catalyses 3-phosphoshikimate + phosphoenolpyruvate = 5-O-(1-carboxyvinyl)-3-phosphoshikimate + phosphate. Its pathway is metabolic intermediate biosynthesis; chorismate biosynthesis; chorismate from D-erythrose 4-phosphate and phosphoenolpyruvate: step 6/7. Functionally, catalyzes the transfer of the enolpyruvyl moiety of phosphoenolpyruvate (PEP) to the 5-hydroxyl of shikimate-3-phosphate (S3P) to produce enolpyruvyl shikimate-3-phosphate and inorganic phosphate. The sequence is that of 3-phosphoshikimate 1-carboxyvinyltransferase from Legionella pneumophila (strain Corby).